Consider the following 676-residue polypeptide: MPDPSTYRPAPGSIPVEPGVYRFRDPHGRVIYVGKAKSLRSRLNSYFADLSGLAPRTRQMVMTAAKVEWTVVNTEVEALQLEYNWIKEFDPRFNIRYRDDKSYPVLAVTLNEEFPRLKVYRGPRKKGVRYFGPYSHAWAIRETVDLLTRVFPARTCSAGVFKRHNQIDRPCLLGYIDKCSAPCVGRVSAEQHRQIVLDFCDFLAGKTDRLVRDLERKMTAAAEDLDFERAARLRDDIGALRRALEKQTVVFGDGTDADVVAFADDDLEAAVQVFHVRGGRVRGQRGWIVEKSGEPGESGEGQLVEQFLTQFYGDQAELGSAGDNAGDSGQDEATNPVPRQVLVPCLPDNADELTEWLSQLRGSRVALRVPQRGDKKALFETVQRNAKEALAQHKLKRAGDFTARTAALQSIQDTLGLADAPLRIECIDISHVQGTDVVASLVVFEDGLPRKSDYRHYAIREAAGDGRSDDVASIAEVTRRRFYRHLHDTQHPTELSAEGKSRKFAYPPNLFVVDGGAPQVNAAQAVLDELGISDVAVIGLAKRLEEVWVPSGSDLGPEPIILPRNSEGLYLLQRVRDEAHRFAITYHRSKRSKRMTASALDSVRGLGEHRRKALVTHFGSVARLKEASVEEITAVPGIGVTTARAVLEALGVPQAAPADSDTAAAVIDDDQRRVTG.

The GIY-YIG domain maps to 16–95 (VEPGVYRFRD…IKEFDPRFNI (80 aa)). Residues 208–243 (DRLVRDLERKMTAAAEDLDFERAARLRDDIGALRRA) form the UVR domain.

The protein belongs to the UvrC family. In terms of assembly, interacts with UvrB in an incision complex.

The protein localises to the cytoplasm. Functionally, the UvrABC repair system catalyzes the recognition and processing of DNA lesions. UvrC both incises the 5' and 3' sides of the lesion. The N-terminal half is responsible for the 3' incision and the C-terminal half is responsible for the 5' incision. The polypeptide is UvrABC system protein C (Mycobacterium sp. (strain KMS)).